Here is a 547-residue protein sequence, read N- to C-terminus: Chaperonin GroEL (547 aa).

ATP-binding positions include 30–33 (TLGP), K51, 87–91 (DGTTT), G415, 479–481 (NAA), and D495.

Belongs to the chaperonin (HSP60) family. Forms a cylinder of 14 subunits composed of two heptameric rings stacked back-to-back. Interacts with the co-chaperonin GroES.

It localises to the cytoplasm. It catalyses the reaction ATP + H2O + a folded polypeptide = ADP + phosphate + an unfolded polypeptide.. Together with its co-chaperonin GroES, plays an essential role in assisting protein folding. The GroEL-GroES system forms a nano-cage that allows encapsulation of the non-native substrate proteins and provides a physical environment optimized to promote and accelerate protein folding. This Pseudomonas syringae pv. syringae (strain B728a) protein is Chaperonin GroEL.